Consider the following 327-residue polypeptide: Probable pectinesterase A (327 aa).

Positions Met-1–Gly-19 are cleaved as a signal peptide. An N-linked (GlcNAc...) asparagine glycan is attached at Asn-84. Gln-145 is a substrate binding site. Catalysis depends on Asp-168, which acts as the Proton donor. Asp-189 serves as the catalytic Nucleophile. 2 residues coordinate substrate: Arg-249 and Trp-251. N-linked (GlcNAc...) asparagine glycosylation occurs at Asn-288.

The protein belongs to the pectinesterase family.

The protein resides in the secreted. The catalysed reaction is [(1-&gt;4)-alpha-D-galacturonosyl methyl ester](n) + n H2O = [(1-&gt;4)-alpha-D-galacturonosyl](n) + n methanol + n H(+). It participates in glycan metabolism; pectin degradation; 2-dehydro-3-deoxy-D-gluconate from pectin: step 1/5. Functionally, involved in maceration and soft-rotting of plant tissue. In Aspergillus niger (strain ATCC MYA-4892 / CBS 513.88 / FGSC A1513), this protein is Probable pectinesterase A (pmeA).